We begin with the raw amino-acid sequence, 144 residues long: Large ribosomal subunit protein uL16 (144 aa).

A compositionally biased stretch (basic residues) spans 1 to 19; it reads MLLPKRVKYRRQHRPKTTG. Residues 1-23 form a disordered region; sequence MLLPKRVKYRRQHRPKTTGRSKG.

The protein belongs to the universal ribosomal protein uL16 family. As to quaternary structure, part of the 50S ribosomal subunit.

Its function is as follows. Binds 23S rRNA and is also seen to make contacts with the A and possibly P site tRNAs. This chain is Large ribosomal subunit protein uL16, found in Staphylococcus haemolyticus (strain JCSC1435).